Consider the following 811-residue polypeptide: TLR4 interactor with leucine rich repeats (811 aa).

The N-terminal stretch at 1–25 is a signal peptide; it reads MEGVGAVRFWLVVCGCLAFPPRAES. The region spanning 26 to 57 is the LRRNT domain; that stretch reads VCPERCDCQHPQHLLCTNRGLRAVPKTSSLPS. Residues 26–696 are Extracellular-facing; it reads VCPERCDCQH…AGGRGGVDYQ (671 aa). LRR repeat units lie at residues 61–81, 84–105, 108–129, 132–153, 156–177, 180–201, 204–223, 230–251, 254–275, 278–298, 302–323, and 326–347; these read VLTY…DFHR, QLRR…TFEK, RLEE…TLAP, KLRI…SFEG, SLVK…VFAP, NLLY…AFTQ, KLRF…RHAA, SLST…VFQH, RLGL…AFWG, ALRE…TLLE, SLEA…TFGH, and RLRE…IFAA. An N-linked (GlcNAc...) asparagine glycan is attached at N73. Positions 359–416 constitute an LRRCT domain; that stretch reads NGWTCDCRLRGLKRWMGNWHSQGRLLTVFVQCRHPPALRGKYLDYLDDQLLQNGSCVD. N411 is a glycosylation site (N-linked (GlcNAc...) asparagine). Disordered stretches follow at residues 414 to 460 and 486 to 562; these read CVDP…QQRG and RRGP…QQGR. Positions 421-430 are enriched in polar residues; it reads PTAGSRQWPI. Low complexity-rich tracts occupy residues 440–460 and 494–508; these read PPAG…QQRG and QSPS…APQS. The span at 510 to 519 shows a compositional bias: basic and acidic residues; sequence DLHEKPERGR. Positions 524-545 are enriched in polar residues; sequence NLPQTEPTPTSEPASGTPSARD. A glycan (N-linked (GlcNAc...) asparagine) is linked at N589. A helical transmembrane segment spans residues 697–717; that stretch reads LLTLVLLAINALLVLLALAAW. Residues 718 to 809 are Cytoplasmic-facing; sequence GSRWLRRKLR…RREDHLLQRF (92 aa). S798 carries the post-translational modification Phosphoserine.

Belongs to the lipopolysaccharide (LPS) receptor, a multi-protein complex containing at least CD14, MD-2 and TLR4. Interacts with TLR4; this interaction is greatly enhanced following LPS stimulation. Interacts with LPS. N-glycolysaled. As to expression, highly expressed in cortical astrocytes and in cerebellar granule neurons.

It localises to the membrane. Component of the TLR4 signaling complex. Mediates the innate immune response to bacterial lipopolysaccharide (LPS) leading to cytokine secretion and the inflammatory response. This is TLR4 interactor with leucine rich repeats (Tril) from Rattus norvegicus (Rat).